Reading from the N-terminus, the 324-residue chain is Interactor of constitutive active ROPs 4 (324 aa).

Disordered regions lie at residues methionine 1–glutamate 74, leucine 91–glutamate 156, serine 175–glutamate 201, and phenylalanine 289–lysine 324. The segment covering glutamine 13–serine 28 has biased composition (low complexity). Basic and acidic residues-rich tracts occupy residues aspartate 29–serine 50, glutamate 95–histidine 106, and proline 118–glutamate 156. A coiled-coil region spans residues serine 62–glycine 266. Over residues methionine 313–lysine 324 the composition is skewed to basic and acidic residues.

The protein belongs to the ICR family. In terms of assembly, interacts with ARAC11 in vitro.

Its function is as follows. Acts as a scaffold, mediating interaction of ROPs with different proteins. This Arabidopsis thaliana (Mouse-ear cress) protein is Interactor of constitutive active ROPs 4 (ICR4).